Consider the following 246-residue polypeptide: Probable transcriptional regulatory protein Pden_1905 (246 aa).

The disordered stretch occupies residues 1–21 (MAGHSKWANIQHRKGKQDKLR).

The protein belongs to the TACO1 family.

It localises to the cytoplasm. The protein is Probable transcriptional regulatory protein Pden_1905 of Paracoccus denitrificans (strain Pd 1222).